A 121-amino-acid polypeptide reads, in one-letter code: Alpha-lactalbumin (121 aa).

The C-type lysozyme domain occupies 1-121; that stretch reads IDYRKCQASQ…CLEDLDQWRC (121 aa). Intrachain disulfides connect Cys6-Cys121, Cys28-Cys112, Cys61-Cys77, and Cys73-Cys91. Residue Asn44 is glycosylated (N-linked (GlcNAc...) asparagine). Residues Lys79, Asp82, Asp84, Asp87, and Asp88 each coordinate Ca(2+).

The protein belongs to the glycosyl hydrolase 22 family. In terms of assembly, lactose synthase (LS) is a heterodimer of a catalytic component, beta1,4-galactosyltransferase (beta4Gal-T1) and a regulatory component, alpha-lactalbumin (LA). In terms of tissue distribution, mammary gland specific. Secreted in milk.

It is found in the secreted. In terms of biological role, regulatory subunit of lactose synthase, changes the substrate specificity of galactosyltransferase in the mammary gland making glucose a good acceptor substrate for this enzyme. This enables LS to synthesize lactose, the major carbohydrate component of milk. In other tissues, galactosyltransferase transfers galactose onto the N-acetylglucosamine of the oligosaccharide chains in glycoproteins. This is Alpha-lactalbumin (LALBA) from Notamacropus rufogriseus (Red-necked wallaby).